Reading from the N-terminus, the 121-residue chain is Small ribosomal subunit protein uS13 (121 aa).

A disordered region spans residues 89-121; the sequence is RRHRMSLPVRGQRTRTNARTRRGSRKTVAGRKK. The segment covering 100–121 has biased composition (basic residues); that stretch reads QRTRTNARTRRGSRKTVAGRKK.

This sequence belongs to the universal ribosomal protein uS13 family. Part of the 30S ribosomal subunit. Forms a loose heterodimer with protein S19. Forms two bridges to the 50S subunit in the 70S ribosome.

Functionally, located at the top of the head of the 30S subunit, it contacts several helices of the 16S rRNA. In the 70S ribosome it contacts the 23S rRNA (bridge B1a) and protein L5 of the 50S subunit (bridge B1b), connecting the 2 subunits; these bridges are implicated in subunit movement. Contacts the tRNAs in the A and P-sites. This Prochlorococcus marinus subsp. pastoris (strain CCMP1986 / NIES-2087 / MED4) protein is Small ribosomal subunit protein uS13.